A 113-amino-acid chain; its full sequence is CWELYWLEHGIQPDGMMPSDTTVGVGDDAFNTFFSETGAGKHVPRAVFVDLEPTVIDEVRTGAYRQLFHPEQLISGKEDAANNFARGHYTVGEEIVDLCLDRVRKLADNCTGL.

Glu-52 contributes to the GTP binding site. Glu-52 contacts Mg(2+).

Belongs to the tubulin family. Dimer of alpha and beta chains. A typical microtubule is a hollow water-filled tube with an outer diameter of 25 nm and an inner diameter of 15 nM. Alpha-beta heterodimers associate head-to-tail to form protofilaments running lengthwise along the microtubule wall with the beta-tubulin subunit facing the microtubule plus end conferring a structural polarity. Microtubules usually have 13 protofilaments but different protofilament numbers can be found in some organisms and specialized cells. Mg(2+) is required as a cofactor.

It is found in the cytoplasm. It localises to the cytoskeleton. The catalysed reaction is GTP + H2O = GDP + phosphate + H(+). In terms of biological role, tubulin is the major constituent of microtubules, a cylinder consisting of laterally associated linear protofilaments composed of alpha- and beta-tubulin heterodimers. Microtubules grow by the addition of GTP-tubulin dimers to the microtubule end, where a stabilizing cap forms. Below the cap, tubulin dimers are in GDP-bound state, owing to GTPase activity of alpha-tubulin. The protein is Tubulin alpha chain (TUBA) of Picea abies (Norway spruce).